The primary structure comprises 609 residues: Hemagglutinin/proteinase (609 aa).

Residues 1-24 form the signal peptide; that stretch reads MKMIQRPLNWLVLAGAATGFPLYA. A propeptide spanning residues 25–196 is cleaved from the precursor; sequence AQMVTIDDAS…LDQWDGINHA (172 aa). Histidine 343 provides a ligand contact to Zn(2+). Residue glutamate 344 is part of the active site. The Zn(2+) site is built by histidine 347 and glutamate 367. The active-site Proton donor is the histidine 426.

It belongs to the peptidase M4 family. It depends on Zn(2+) as a cofactor.

It localises to the secreted. Its function is as follows. May play a role in the pathogenesis of cholera. Hap nicks and activates the A subunit of cholera enterotoxin and related enterotoxins. The chain is Hemagglutinin/proteinase (hap) from Vibrio cholerae serotype O1 (strain ATCC 39315 / El Tor Inaba N16961).